Reading from the N-terminus, the 86-residue chain is Toxin Cn1 (86 aa).

Residues 1-19 form the signal peptide; the sequence is MNSLLMITACFVLIGTVWA. The LCN-type CS-alpha/beta domain occupies 20–84; it reads KDGYLVDAKG…TWPLPNKTCS (65 aa). 4 disulfide bridges follow: Cys30-Cys83, Cys34-Cys59, Cys43-Cys64, and Cys47-Cys66. Ser84 is modified (serine amide).

The protein belongs to the long (4 C-C) scorpion toxin superfamily. Sodium channel inhibitor family. Beta subfamily. In terms of tissue distribution, expressed by the venom gland.

The protein resides in the secreted. Functionally, beta toxins bind voltage-independently at site-4 of sodium channels (Nav) and shift the voltage of activation toward more negative potentials thereby affecting sodium channel activation and promoting spontaneous and repetitive firing. This is Toxin Cn1 from Centruroides noxius (Mexican scorpion).